We begin with the raw amino-acid sequence, 134 residues long: ATP synthase epsilon chain, chloroplastic (134 aa).

It belongs to the ATPase epsilon chain family. F-type ATPases have 2 components, CF(1) - the catalytic core - and CF(0) - the membrane proton channel. CF(1) has five subunits: alpha(3), beta(3), gamma(1), delta(1), epsilon(1). CF(0) has three main subunits: a, b and c.

The protein localises to the plastid. It is found in the chloroplast thylakoid membrane. Functionally, produces ATP from ADP in the presence of a proton gradient across the membrane. This Porphyra purpurea (Red seaweed) protein is ATP synthase epsilon chain, chloroplastic.